The sequence spans 323 residues: Sphingolipid delta(4)-desaturase/C4-monooxygenase DES2 (323 aa).

Gly2 is lipidated: N-myristoyl glycine. Transmembrane regions (helical) follow at residues 45-65 (WAVL…RGLA) and 68-88 (WLLF…TLAI). Residues 89–93 (HDISH) carry the Histidine box-1 motif. Residues 95-99 (AAFGT) are required for C4-hydroxylase activity. The short motif at 128 to 132 (HVDHH) is the Histidine box-2 element. Residues 210 to 231 (VYLLASSFLGLGLHPISGHFVA) form a helical membrane-spanning segment. The Histidine box-3 signature appears at 259-263 (HVEHH).

It belongs to the fatty acid desaturase type 1 family. DEGS subfamily. Highly expressed in skin, intestine and kidney.

The protein localises to the endoplasmic reticulum membrane. The enzyme catalyses a dihydroceramide + 2 Fe(II)-[cytochrome b5] + O2 + 2 H(+) = a phytoceramide + 2 Fe(III)-[cytochrome b5] + H2O. It catalyses the reaction an N-acylsphinganine + 2 Fe(II)-[cytochrome b5] + O2 + 2 H(+) = an N-acylsphing-4-enine + 2 Fe(III)-[cytochrome b5] + 2 H2O. It carries out the reaction N-octanoylsphinganine + 2 Fe(II)-[cytochrome b5] + O2 + 2 H(+) = N-octanoyl-4-hydroxysphinganine + 2 Fe(III)-[cytochrome b5] + H2O. The catalysed reaction is an N-acylsphinganine + 2 Fe(II)-[cytochrome b5] + O2 + 2 H(+) = an N-acyl-(4R)-4-hydroxysphinganine + 2 Fe(III)-[cytochrome b5] + H2O. It participates in membrane lipid metabolism; sphingolipid biosynthesis. Its function is as follows. Bifunctional enzyme which acts both as a sphingolipid delta(4)-desaturase and a sphingolipid C4-monooxygenase. This chain is Sphingolipid delta(4)-desaturase/C4-monooxygenase DES2, found in Homo sapiens (Human).